Reading from the N-terminus, the 340-residue chain is 4-hydroxythreonine-4-phosphate dehydrogenase (340 aa).

Substrate is bound at residue T135. 3 residues coordinate a divalent metal cation: H170, H215, and H276. 3 residues coordinate substrate: K284, N293, and R302.

Belongs to the PdxA family. As to quaternary structure, homodimer. It depends on a divalent metal cation as a cofactor.

It is found in the cytoplasm. It catalyses the reaction 4-(phosphooxy)-L-threonine + NAD(+) = 3-amino-2-oxopropyl phosphate + CO2 + NADH. Its pathway is cofactor biosynthesis; pyridoxine 5'-phosphate biosynthesis; pyridoxine 5'-phosphate from D-erythrose 4-phosphate: step 4/5. In terms of biological role, catalyzes the NAD(P)-dependent oxidation of 4-(phosphooxy)-L-threonine (HTP) into 2-amino-3-oxo-4-(phosphooxy)butyric acid which spontaneously decarboxylates to form 3-amino-2-oxopropyl phosphate (AHAP). In Synechococcus sp. (strain JA-2-3B'a(2-13)) (Cyanobacteria bacterium Yellowstone B-Prime), this protein is 4-hydroxythreonine-4-phosphate dehydrogenase.